A 571-amino-acid polypeptide reads, in one-letter code: Proline--tRNA ligase (571 aa).

Belongs to the class-II aminoacyl-tRNA synthetase family. ProS type 1 subfamily. In terms of assembly, homodimer.

The protein resides in the cytoplasm. It carries out the reaction tRNA(Pro) + L-proline + ATP = L-prolyl-tRNA(Pro) + AMP + diphosphate. Functionally, catalyzes the attachment of proline to tRNA(Pro) in a two-step reaction: proline is first activated by ATP to form Pro-AMP and then transferred to the acceptor end of tRNA(Pro). As ProRS can inadvertently accommodate and process non-cognate amino acids such as alanine and cysteine, to avoid such errors it has two additional distinct editing activities against alanine. One activity is designated as 'pretransfer' editing and involves the tRNA(Pro)-independent hydrolysis of activated Ala-AMP. The other activity is designated 'posttransfer' editing and involves deacylation of mischarged Ala-tRNA(Pro). The misacylated Cys-tRNA(Pro) is not edited by ProRS. This is Proline--tRNA ligase from Histophilus somni (strain 2336) (Haemophilus somnus).